A 443-amino-acid polypeptide reads, in one-letter code: ATP-dependent protease ATPase subunit HslU (443 aa).

ATP-binding positions include isoleucine 18, 60-65, aspartate 256, glutamate 321, and arginine 393; that span reads GVGKTE.

This sequence belongs to the ClpX chaperone family. HslU subfamily. As to quaternary structure, a double ring-shaped homohexamer of HslV is capped on each side by a ring-shaped HslU homohexamer. The assembly of the HslU/HslV complex is dependent on binding of ATP.

Its subcellular location is the cytoplasm. Functionally, ATPase subunit of a proteasome-like degradation complex; this subunit has chaperone activity. The binding of ATP and its subsequent hydrolysis by HslU are essential for unfolding of protein substrates subsequently hydrolyzed by HslV. HslU recognizes the N-terminal part of its protein substrates and unfolds these before they are guided to HslV for hydrolysis. This is ATP-dependent protease ATPase subunit HslU from Buchnera aphidicola subsp. Acyrthosiphon pisum (strain 5A).